Consider the following 342-residue polypeptide: Foldase protein PrsA (342 aa).

An N-terminal signal peptide occupies residues 1–22; the sequence is MVSVKKIVASALVGVLMFSAVG. Cys-23 carries N-palmitoyl cysteine lipidation. Cys-23 carries the S-diacylglycerol cysteine lipid modification. The region spanning 190–284 is the PpiC domain; that stretch reads AKGVLARHLL…FGYHIIQAGA (95 aa).

This sequence belongs to the PrsA family.

The protein resides in the cell membrane. The catalysed reaction is [protein]-peptidylproline (omega=180) = [protein]-peptidylproline (omega=0). In terms of biological role, plays a major role in protein secretion by helping the post-translocational extracellular folding of several secreted proteins. This chain is Foldase protein PrsA, found in Clostridium perfringens (strain SM101 / Type A).